A 324-amino-acid polypeptide reads, in one-letter code: Non-homologous end joining protein Ku 1 (324 aa).

The Ku domain occupies 10–193 (INFGLVTIPV…AKPSDKEIQM (184 aa)). Positions 256-324 (QARRGRGGQV…SGGRRRRRAS (69 aa)) are disordered. The span at 281–292 (AELDKKAKELGI) shows a compositional bias: basic and acidic residues.

Belongs to the prokaryotic Ku family. As to quaternary structure, homodimer. Interacts with LigD.

In terms of biological role, with LigD forms a non-homologous end joining (NHEJ) DNA repair enzyme, which repairs dsDNA breaks with reduced fidelity. Binds linear dsDNA with 5'- and 3'- overhangs but not closed circular dsDNA nor ssDNA. Recruits and stimulates the ligase activity of LigD. This chain is Non-homologous end joining protein Ku 1, found in Saccharopolyspora erythraea (strain ATCC 11635 / DSM 40517 / JCM 4748 / NBRC 13426 / NCIMB 8594 / NRRL 2338).